The sequence spans 346 residues: Very-long-chain 3-oxoacyl-CoA reductase (346 aa).

A helical membrane pass occupies residues 26–46 (SAYFLLAAGSLFVASRALTFV). NADP(+) contacts are provided by V71, D126, D134, N153, Y220, K224, I253, and S255. Y220 functions as the Proton donor in the catalytic mechanism. K224 serves as the catalytic Lowers pKa of active site Tyr.

Belongs to the short-chain dehydrogenases/reductases (SDR) family.

Its subcellular location is the endoplasmic reticulum membrane. The catalysed reaction is a very-long-chain (3R)-3-hydroxyacyl-CoA + NADP(+) = a very-long-chain 3-oxoacyl-CoA + NADPH + H(+). The protein operates within lipid metabolism; fatty acid biosynthesis. In terms of biological role, component of the microsomal membrane bound fatty acid elongation system, which produces the 26-carbon very long-chain fatty acids (VLCFA) from palmitate. Catalyzes the reduction of the 3-ketoacyl-CoA intermediate that is formed in each cycle of fatty acid elongation. VLCFAs serve as precursors for ceramide and sphingolipids. The sequence is that of Very-long-chain 3-oxoacyl-CoA reductase from Aspergillus oryzae (strain ATCC 42149 / RIB 40) (Yellow koji mold).